We begin with the raw amino-acid sequence, 709 residues long: Fatty acid oxidation complex subunit alpha (709 aa).

The interval 1–188 (MEKTFNLTRR…KMGLVNDVVP (188 aa)) is enoyl-CoA hydratase. The interval 308-709 (RKVKKAVILG…EMAAEKTRFF (402 aa)) is 3-hydroxyacyl-CoA dehydrogenase.

This sequence in the N-terminal section; belongs to the enoyl-CoA hydratase/isomerase family. It in the central section; belongs to the 3-hydroxyacyl-CoA dehydrogenase family. In terms of assembly, heterotetramer of two alpha chains (FadJ) and two beta chains (FadI).

It localises to the cytoplasm. It catalyses the reaction a (3S)-3-hydroxyacyl-CoA = a (2E)-enoyl-CoA + H2O. The catalysed reaction is a 4-saturated-(3S)-3-hydroxyacyl-CoA = a (3E)-enoyl-CoA + H2O. It carries out the reaction a (3S)-3-hydroxyacyl-CoA + NAD(+) = a 3-oxoacyl-CoA + NADH + H(+). The enzyme catalyses (3S)-3-hydroxybutanoyl-CoA = (3R)-3-hydroxybutanoyl-CoA. Its pathway is lipid metabolism; fatty acid beta-oxidation. Its function is as follows. Catalyzes the formation of a hydroxyacyl-CoA by addition of water on enoyl-CoA. Also exhibits 3-hydroxyacyl-CoA epimerase and 3-hydroxyacyl-CoA dehydrogenase activities. The sequence is that of Fatty acid oxidation complex subunit alpha from Shewanella sp. (strain MR-7).